Consider the following 117-residue polypeptide: Prefoldin subunit beta (117 aa).

It belongs to the prefoldin subunit beta family. In terms of assembly, heterohexamer of two alpha and four beta subunits.

It localises to the cytoplasm. In terms of biological role, molecular chaperone capable of stabilizing a range of proteins. Seems to fulfill an ATP-independent, HSP70-like function in archaeal de novo protein folding. The sequence is that of Prefoldin subunit beta (pfdB) from Pyrococcus abyssi (strain GE5 / Orsay).